A 429-amino-acid polypeptide reads, in one-letter code: 3-phosphoshikimate 1-carboxyvinyltransferase (429 aa).

Residues Lys-11, Ser-12, and Arg-16 each coordinate 3-phosphoshikimate. Lys-11 provides a ligand contact to phosphoenolpyruvate. Phosphoenolpyruvate contacts are provided by Gly-82 and Arg-110. Residues Ser-155, Gln-157, Asp-302, and Lys-329 each contribute to the 3-phosphoshikimate site. Phosphoenolpyruvate is bound at residue Gln-157. Asp-302 (proton acceptor) is an active-site residue. Phosphoenolpyruvate contacts are provided by Arg-333 and Arg-385.

This sequence belongs to the EPSP synthase family. Monomer.

It is found in the cytoplasm. It carries out the reaction 3-phosphoshikimate + phosphoenolpyruvate = 5-O-(1-carboxyvinyl)-3-phosphoshikimate + phosphate. Its pathway is metabolic intermediate biosynthesis; chorismate biosynthesis; chorismate from D-erythrose 4-phosphate and phosphoenolpyruvate: step 6/7. Its function is as follows. Catalyzes the transfer of the enolpyruvyl moiety of phosphoenolpyruvate (PEP) to the 5-hydroxyl of shikimate-3-phosphate (S3P) to produce enolpyruvyl shikimate-3-phosphate and inorganic phosphate. The polypeptide is 3-phosphoshikimate 1-carboxyvinyltransferase (Helicobacter acinonychis (strain Sheeba)).